The sequence spans 50 residues: Major pollen allergen Ole e 6 (50 aa).

Cystine bridges form between C8–C34, C12–C30, and C16–C26.

Expressed in pollen.

The protein is Major pollen allergen Ole e 6 (OLE6) of Olea europaea (Common olive).